A 394-amino-acid polypeptide reads, in one-letter code: Dual-specificity RNA methyltransferase RlmN (394 aa).

Catalysis depends on glutamate 115, which acts as the Proton acceptor. The 243-residue stretch at 121–363 (DEGRGTLCVS…SPIRTPRGED (243 aa)) folds into the Radical SAM core domain. The cysteines at positions 128 and 368 are disulfide-linked. [4Fe-4S] cluster-binding residues include cysteine 135, cysteine 139, and cysteine 142. S-adenosyl-L-methionine-binding positions include 194-195 (GE), serine 226, 248-250 (SFH), and asparagine 325. Cysteine 368 (S-methylcysteine intermediate) is an active-site residue.

This sequence belongs to the radical SAM superfamily. RlmN family. The cofactor is [4Fe-4S] cluster.

Its subcellular location is the cytoplasm. It catalyses the reaction adenosine(2503) in 23S rRNA + 2 reduced [2Fe-2S]-[ferredoxin] + 2 S-adenosyl-L-methionine = 2-methyladenosine(2503) in 23S rRNA + 5'-deoxyadenosine + L-methionine + 2 oxidized [2Fe-2S]-[ferredoxin] + S-adenosyl-L-homocysteine. The catalysed reaction is adenosine(37) in tRNA + 2 reduced [2Fe-2S]-[ferredoxin] + 2 S-adenosyl-L-methionine = 2-methyladenosine(37) in tRNA + 5'-deoxyadenosine + L-methionine + 2 oxidized [2Fe-2S]-[ferredoxin] + S-adenosyl-L-homocysteine. Specifically methylates position 2 of adenine 2503 in 23S rRNA and position 2 of adenine 37 in tRNAs. m2A2503 modification seems to play a crucial role in the proofreading step occurring at the peptidyl transferase center and thus would serve to optimize ribosomal fidelity. The protein is Dual-specificity RNA methyltransferase RlmN of Roseobacter denitrificans (strain ATCC 33942 / OCh 114) (Erythrobacter sp. (strain OCh 114)).